The primary structure comprises 310 residues: 26S proteasome non-ATPase regulatory subunit 7 homolog B (310 aa).

Methionine 1 carries the N-acetylmethionine modification. Residues 17-154 (VIVHPLVLLS…YYAVEEVKEN (138 aa)) enclose the MPN domain.

This sequence belongs to the peptidase M67A family. In terms of assembly, component of the 19S regulatory particle (RP/PA700) lid subcomplex of the 26S proteasome. The 26S proteasome is composed of a core protease (CP), known as the 20S proteasome, capped at one or both ends by the 19S regulatory particle (RP/PA700). The RP/PA700 complex is composed of at least 17 different subunits in two subcomplexes, the base and the lid, which form the portions proximal and distal to the 20S proteolytic core, respectively.

Acts as a regulatory subunit of the 26S proteasome which is involved in the ATP-dependent degradation of ubiquitinated proteins. The chain is 26S proteasome non-ATPase regulatory subunit 7 homolog B (RPN8B) from Arabidopsis thaliana (Mouse-ear cress).